We begin with the raw amino-acid sequence, 324 residues long: tRNA dimethylallyltransferase (324 aa).

Residue 17–24 (GPTASGKT) participates in ATP binding. 19–24 (TASGKT) contacts substrate. 3 interaction with substrate tRNA regions span residues 42 to 45 (DSAL), 166 to 170 (QRIQR), and 251 to 256 (RCVGYR).

Belongs to the IPP transferase family. As to quaternary structure, monomer. The cofactor is Mg(2+).

It carries out the reaction adenosine(37) in tRNA + dimethylallyl diphosphate = N(6)-dimethylallyladenosine(37) in tRNA + diphosphate. Catalyzes the transfer of a dimethylallyl group onto the adenine at position 37 in tRNAs that read codons beginning with uridine, leading to the formation of N6-(dimethylallyl)adenosine (i(6)A). The chain is tRNA dimethylallyltransferase from Burkholderia pseudomallei (strain 668).